A 175-amino-acid polypeptide reads, in one-letter code: ATP synthase subunit b, chloroplastic (175 aa).

The chain crosses the membrane as a helical span at residues 22–42; the sequence is VFETNIINLAAVVGIVVSFVG.

It belongs to the ATPase B chain family. In terms of assembly, F-type ATPases have 2 components, F(1) - the catalytic core - and F(0) - the membrane proton channel. F(1) has five subunits: alpha(3), beta(3), gamma(1), delta(1), epsilon(1). F(0) has four main subunits: a(1), b(1), b'(1) and c(10-14). The alpha and beta chains form an alternating ring which encloses part of the gamma chain. F(1) is attached to F(0) by a central stalk formed by the gamma and epsilon chains, while a peripheral stalk is formed by the delta, b and b' chains.

The protein localises to the plastid. Its subcellular location is the chloroplast thylakoid membrane. Its function is as follows. F(1)F(0) ATP synthase produces ATP from ADP in the presence of a proton or sodium gradient. F-type ATPases consist of two structural domains, F(1) containing the extramembraneous catalytic core and F(0) containing the membrane proton channel, linked together by a central stalk and a peripheral stalk. During catalysis, ATP synthesis in the catalytic domain of F(1) is coupled via a rotary mechanism of the central stalk subunits to proton translocation. In terms of biological role, component of the F(0) channel, it forms part of the peripheral stalk, linking F(1) to F(0). This is ATP synthase subunit b, chloroplastic from Chlamydomonas reinhardtii (Chlamydomonas smithii).